Reading from the N-terminus, the 562-residue chain is Abrin-c (562 aa).

A signal peptide spans 1 to 34; the sequence is MDKTLKLLILCLAWTCSFSALRCAARTYPPVATN. Gln35 is modified (pyrrolidone carboxylic acid). Glu198 is a catalytic residue. N-linked (GlcNAc...) asparagine glycosylation is present at Asn234. Cystine bridges form between Cys281/Cys303, Cys320/Cys339, and Cys363/Cys380. The region spanning 307 to 434 is the Ricin B-type lectin 1 domain; the sequence is YEPTVRIGGR…YLMRQGWRTG (128 aa). The stretch at 317–359 is one 1-alpha repeat; that stretch reads DGMCVDVYDDGYHNGNRIIAWKCKDRLEENQLWTLKSDKTIRS. One copy of the 1-beta repeat lies at 360 to 400; it reads NGKCLTTEGYAPGNYVMIYDCTSAVAEATYWEIWDNGTIIN. Residues Asn395 and Asn435 are each glycosylated (N-linked (GlcNAc...) asparagine). The 1-gamma repeat unit spans residues 403-435; the sequence is SALVLSAESSSMGGTLTVQTNEYLMRQGWRTGN. The region spanning 437 to 561 is the Ricin B-type lectin 2 domain; it reads TSPFVTSISG…GKPNQIWLTL (125 aa). A 2-alpha repeat occupies 448-483; that stretch reads SDLCMQAQGSNVWLADCDNNKKEQQWALYTDGSIRS. 2 cysteine pairs are disulfide-bonded: Cys451–Cys464 and Cys490–Cys507. A 2-beta repeat occupies 487-526; it reads TNNCLTSKDHKQGSPIVLMACSNGWASQRWLFKNDGSIYN. The stretch at 529–562 is one 2-gamma repeat; that stretch reads DDMVMDVKRSDPSLKEIILHPYHGKPNQIWLTLF.

This sequence in the N-terminal section; belongs to the ribosome-inactivating protein family. Type 2 RIP subfamily. In terms of assembly, disulfide-linked dimer of A and B chains.

The enzyme catalyses Endohydrolysis of the N-glycosidic bond at one specific adenosine on the 28S rRNA.. The A chain is responsible for inhibiting protein synthesis through the catalytic inactivation of 60S ribosomal subunits by removing adenine from position 4,324 of 28S rRNA. Abrin-a is more toxic than ricin. Its function is as follows. The B chain is a galactose-specific lectin that facilitates the binding of abrin to the cell membrane that precedes endocytosis. In Abrus precatorius (Indian licorice), this protein is Abrin-c.